The following is a 341-amino-acid chain: Phosphoribosylformylglycinamidine cyclo-ligase (341 aa).

The protein belongs to the AIR synthase family.

The protein resides in the cytoplasm. It carries out the reaction 2-formamido-N(1)-(5-O-phospho-beta-D-ribosyl)acetamidine + ATP = 5-amino-1-(5-phospho-beta-D-ribosyl)imidazole + ADP + phosphate + H(+). The protein operates within purine metabolism; IMP biosynthesis via de novo pathway; 5-amino-1-(5-phospho-D-ribosyl)imidazole from N(2)-formyl-N(1)-(5-phospho-D-ribosyl)glycinamide: step 2/2. This chain is Phosphoribosylformylglycinamidine cyclo-ligase, found in Xanthomonas campestris pv. campestris (strain 8004).